Here is a 1567-residue protein sequence, read N- to C-terminus: MASQPPQPPSGQPDTQYEEYQSEVITETTNRPTPAADVYEITPTNDVMDDRYEHEHDDYESGAMYETVRTWSPQSRPELVRIASVFSRIDSHPDVAPTTEDGGQLNRRDTLAGVKIGDPVLDPTKPEFDFYKWARMFTHVMEKEGIKRNRTGVMFRNLTVLGSGSAVQYQDTFLSPFAAPFRPGELCGKGRNPEKVILHDFNGAIREGELLMVLGRPGSGCSTFLKAICGELHGLQKKKESIIHYNGVSQHTFKKELRGEAVYSAEDEHHFPHLTVGQTLEFAAAARTPSKRVLGLSRKDFSTHLARVMMSVFGLSHTYNTKVGDDYVRGVSGGERKRVSIAEIALSGAPICCWDNSTRGLDSATALEFTKALKIGSQVGGITQCLAIYQASQAIYDIFDKVIVLYEGRQIFFGPTRIAKQYFEEMGWYCPPRQTTADFLTSVTNPKERIAKEGYENRVPRTAVEFERYWKQSQNNKLLLANMDRFEAEYPPEEGHLEKLRETHGQAQAKHTASKSPYRISVPMQVKLCTVRAYQRLWGDKSSTIATNISQIMMALIIGSLFFDTPQTTDGFFAKGSVIFFAILLNGLMSITEINGLCKATEPIVPNAQRPIVVKHVNFAFYHAYSEALAGIVADIPIKFLLALVFNIIIYFLGGLERSAAKFFIFFLFTFITILTMSAIFRTLAAATKTIPQALALAGVMILALVIYTGFTLQPSYMHPWFKWILYINPIAYAYEALLVNEVHGNRYRCATPIPPYGSGKNFACAVAGAVPGEMSVSGDAWVESSYDYSYAHIWRNLGILLGFLAFFYFVYLMVSELNLSSASSAEFLVFRRGHLPKNFQGSKDEEAAAGGVMHPNDPARLPPTNTNGAAGETAPGGSTVAVIPPQKDIFTWRNVTYDITIKGEPRRLLDNISGWVRPGTLTALMGVSGAGKTTLLDALAQRTTMGVITGDMLVNGRPLDSSFQRKTGYVQQQDLHLETTTVREALRFSADLRQPKSVSRKEKYEYVEDVIKMLSMEDFSEAVVGNPGEGLNVEQRKLLTIGVELAAKPQLLLFLDEPTSGLDSQSSWSIVTFLRKLADNGQAVLSTIHQPSGILFEQFDRLLFLAKGGRTVYFGDIGKNSETLLNYFETHGAEPCGPSENPAEYMLNIVGAGPSGKSNIDWPVVWKESEESRHVQQELDRIQSETSKRNEGHGQSAEKEPGEFAMPFTSQLYCVTTRVFQQYWRTPSYIWGKLLLGLASALFIGFSFFLQNSSMAGLQNSLFSIFMLTTIFSSLVQQIMPRFVTQRDLFEVRERPSRAYSWKVFLLANIIVEIPYQILLGIIAWASLFYPTFGAHLSSERQGILLLYCVQFFIFASTFAQMIIAGLPDAETAGGIATTMFGLMVTFNGVLQKPNALPGFWRFMWRVSPITYTVGGLAATSLHSREVKCAQNELAIFDPPSGATCAQYLQKLVEAGAPGKLYNPMSTSQCQYCPLSSGDQFLGGSEIHWSDRWRNFGIGWAYIVFNIFATVALYYLIRVRKSSGRPNRIISVITYHLSQFGTYCRAFITGRKEKCPRKREQIGKIY.

Pro residues predominate over residues 1–11 (MASQPPQPPSG). Residues 1 to 37 (MASQPPQPPSGQPDTQYEEYQSEVITETTNRPTPAAD) are disordered. The span at 22–32 (SEVITETTNRP) shows a compositional bias: polar residues. Residues Asn149, Asn157, and Asn356 are each glycosylated (N-linked (GlcNAc...) asparagine). The ABC transporter 1 domain maps to 167 to 432 (VQYQDTFLSP…FEEMGWYCPP (266 aa)). Helical transmembrane passes span 543–563 (STIATNISQIMMALIIGSLFF), 571–591 (GFFAKGSVIFFAILLNGLMSI), 636–656 (IPIKFLLALVFNIIIYFLGGL), 661–681 (AKFFIFFLFTFITILTMSAIF), 691–711 (IPQALALAGVMILALVIYTGF), and 798–818 (LGILLGFLAFFYFVYLMVSEL). N-linked (GlcNAc...) asparagine glycosylation is found at Asn819, Asn895, and Asn912. Residues 891-1134 (FTWRNVTYDI…LLNYFETHGA (244 aa)) enclose the ABC transporter 2 domain. Residue 927-934 (GVSGAGKT) coordinates ATP. The segment at 1172 to 1202 (ESRHVQQELDRIQSETSKRNEGHGQSAEKEP) is disordered. The helical transmembrane segment at 1231–1251 (IWGKLLLGLASALFIGFSFFL) threads the bilayer. N-linked (GlcNAc...) asparagine glycosylation is present at Asn1253. Transmembrane regions (helical) follow at residues 1257–1277 (AGLQNSLFSIFMLTTIFSSLV), 1305–1325 (VFLLANIIVEIPYQILLGIIA), 1345–1365 (ILLLYCVQFFIFASTFAQMII), 1372–1392 (ETAGGIATTMFGLMVTFNGVL), and 1498–1518 (GIGWAYIVFNIFATVALYYLI).

The protein belongs to the ABC transporter superfamily. ABCG family. PDR (TC 3.A.1.205) subfamily.

The protein localises to the cell membrane. It catalyses the reaction voriconazole(in) + ATP + H2O = voriconazole(out) + ADP + phosphate + H(+). The catalysed reaction is fluconazole(in) + ATP + H2O = fluconazole(out) + ADP + phosphate + H(+). The enzyme catalyses (R)-miconazole(in) + ATP + H2O = (R)-miconazole(out) + ADP + phosphate + H(+). It carries out the reaction (S)-miconazole(in) + ATP + H2O = (S)-miconazole(out) + ADP + phosphate + H(+). In terms of biological role, pleiotropic ABC efflux transporter that may be involved in the modulation susceptibility to a wide range of unrelated cytotoxic compounds, including ethidium bromide, ketoconazole, cycloheximide, fluconazole, griseofulvin, imazalil and itraconazole. In Trichophyton interdigitale (strain MR816), this protein is ABC multidrug transporter MDR1.